Consider the following 382-residue polypeptide: Lipid-A-disaccharide synthase (382 aa).

It belongs to the LpxB family.

The enzyme catalyses 2-N,3-O-bis[(3R)-3-hydroxytetradecanoyl]-alpha-D-glucosaminyl 1-phosphate + UDP-2-N,3-O-bis[(3R)-3-hydroxytetradecanoyl]-alpha-D-glucosamine = lipid A disaccharide (E. coli) + UDP + H(+). It carries out the reaction a lipid X + a UDP-2-N,3-O-bis[(3R)-3-hydroxyacyl]-alpha-D-glucosamine = a lipid A disaccharide + UDP + H(+). The protein operates within glycolipid biosynthesis; lipid IV(A) biosynthesis; lipid IV(A) from (3R)-3-hydroxytetradecanoyl-[acyl-carrier-protein] and UDP-N-acetyl-alpha-D-glucosamine: step 5/6. In terms of biological role, condensation of UDP-2,3-diacylglucosamine and 2,3-diacylglucosamine-1-phosphate to form lipid A disaccharide, a precursor of lipid A, a phosphorylated glycolipid that anchors the lipopolysaccharide to the outer membrane of the cell. The chain is Lipid-A-disaccharide synthase from Escherichia coli O157:H7.